Consider the following 72-residue polypeptide: Arrestin-E (72 aa).

It belongs to the arrestin family. As to expression, adrenal, cerebral cortex, heart, hypothalamus, intestine, liver, lung, pituitary, retina and testis.

The polypeptide is Arrestin-E (Ear) (Rattus norvegicus (Rat)).